A 71-amino-acid chain; its full sequence is Disintegrin viridin (71 aa).

In terms of domain architecture, Disintegrin spans alanine 1–histidine 71. Intrachain disulfides connect cysteine 5-cysteine 20, cysteine 7-cysteine 15, cysteine 14-cysteine 37, cysteine 28-cysteine 34, cysteine 33-cysteine 58, and cysteine 46-cysteine 65. Positions arginine 50–aspartate 52 match the Cell attachment site motif. The disordered stretch occupies residues arginine 50–histidine 71.

It belongs to the venom metalloproteinase (M12B) family. P-II subfamily. P-IIa sub-subfamily. In terms of assembly, monomer (disintegrin). Expressed by the venom gland.

The protein resides in the secreted. Inhibits fibrinogen interaction with platelets. Acts by binding to alpha-IIb/beta-3 (ITGA2B/ITGB3) on the platelet surface and inhibits aggregation induced by ADP, thrombin, platelet-activating factor and collagen. This chain is Disintegrin viridin, found in Crotalus viridis viridis (Prairie rattlesnake).